The primary structure comprises 957 residues: Atromentin synthetase (957 aa).

An adenylation (A) domain region spans residues 59-464 (SVQARTFQDF…SGRIKDTVIV (406 aa)). Residues 596-674 (TPSTDDEKAL…DLAKYVNGLV (79 aa)) enclose the Carrier domain. The thiolation and peptide carrier (T) domain stretch occupies residues 601-671 (DEKALAAIYA…IVSDLAKYVN (71 aa)). The residue at position 633 (S633) is an O-(pantetheine 4'-phosphoryl)serine. A thioesterase (TE) domain region spans residues 697–947 (PIFFVHPGVG…FDHVPQFQKI (251 aa)).

Belongs to the ATP-dependent AMP-binding enzyme family.

It participates in secondary metabolite biosynthesis. Functionally, the L-tyrosine:2-oxoglutarate aminotransferase atrD and the atromentin synthetase atrA catalyze consecutive steps to turn over L-tyrosine into atromentin, which represents the generic precursor molecule for the entire terphenylquinone and pulvinic acid family of pigments, which are widely distributed secondary metabolites in homobasidiomycetes. The first step is catalyzed by atrD which converts L-tyrosine in to 4-hydroxyphenylpyruvate (4-HPP). Adenylation of two 4-HPP monomers by the atrA adenylation (A) domain, ester bond formation between monomers and atrA, and symmetric C-C-bond formation between two monomers by atrA leads to atromentin. The protein is Atromentin synthetase of Tapinella panuoides (Oyster rollrim mushroom).